A 187-amino-acid polypeptide reads, in one-letter code: MILPINTYSDPVLTAKAKPLKGVDSSIRELIADMFDSMYKAPGIGLAAPQVGHSLRLLVVDISTIKEYADYKPMVVINPRIVSVAGRNAMEEGCLSVPGVAGDVVRPSKITLHYRDEKFEEHTEEFSDMMARVLQHEIDHLDGTLFVDRMEKRDRRKVQKTLDAIKQGRVKTSYPIAPHAPKIAVEA.

The Fe cation site is built by Cys94 and His136. Glu137 is a catalytic residue. Residue His140 coordinates Fe cation.

This sequence belongs to the polypeptide deformylase family. The cofactor is Fe(2+).

The enzyme catalyses N-terminal N-formyl-L-methionyl-[peptide] + H2O = N-terminal L-methionyl-[peptide] + formate. Its function is as follows. Removes the formyl group from the N-terminal Met of newly synthesized proteins. Requires at least a dipeptide for an efficient rate of reaction. N-terminal L-methionine is a prerequisite for activity but the enzyme has broad specificity at other positions. The sequence is that of Peptide deformylase from Chlorobaculum parvum (strain DSM 263 / NCIMB 8327) (Chlorobium vibrioforme subsp. thiosulfatophilum).